The primary structure comprises 279 residues: Ribosomal RNA small subunit methyltransferase J (279 aa).

S-adenosyl-L-methionine is bound by residues Glu-138–Arg-139 and Asp-194.

It belongs to the methyltransferase superfamily. RsmJ family.

Its subcellular location is the cytoplasm. It catalyses the reaction guanosine(1516) in 16S rRNA + S-adenosyl-L-methionine = N(2)-methylguanosine(1516) in 16S rRNA + S-adenosyl-L-homocysteine + H(+). Specifically methylates the guanosine in position 1516 of 16S rRNA. This chain is Ribosomal RNA small subunit methyltransferase J, found in Acinetobacter baumannii (strain SDF).